A 168-amino-acid chain; its full sequence is MSGLLHTTLSGLNSDSYCEISRYRDQHFRGSKKLQEKFLKISSTLYVGNLSFYTTEEQIQELFSKCGDVKRIVMGLDKIKKTPCGFCFVEYYTRADAEHAMRFINGTRLDDRIVRTDWDAGFKEGRQYGRGKTGGQVRDEYRTDYDVGRGGFGKIIQMQKANQQPAVY.

MRNA-binding positions include tyrosine 23, tyrosine 46, 115-119 (RTDWD), 126-130 (RQYGR), and 136-137 (QV). In terms of domain architecture, RRM spans 43–121 (STLYVGNLSF…RIVRTDWDAG (79 aa)).

The protein belongs to the RRM NCBP2 family. As to quaternary structure, component of the nuclear cap-binding complex (CBC), a heterodimer composed of NCBP1/CBP80 and NCBP2/CBP20 that interacts with m7GpppG-capped RNA.

Its subcellular location is the nucleus. The protein resides in the cytoplasm. In terms of biological role, component of the cap-binding complex (CBC), which binds co-transcriptionally to the 5' cap of pre-mRNAs and is involved in various processes such as pre-mRNA splicing, translation regulation, nonsense-mediated mRNA decay, RNA-mediated gene silencing (RNAi) by microRNAs (miRNAs) and mRNA export. The CBC complex is involved in mRNA export from the nucleus, leading to the recruitment of the mRNA export machinery to the 5' end of mRNA and to mRNA export in a 5' to 3' direction through the nuclear pore. The CBC complex is also involved in mediating U snRNA and intronless mRNAs export from the nucleus. The CBC complex is essential for a pioneer round of mRNA translation, before steady state translation when the CBC complex is replaced by cytoplasmic cap-binding protein eIF4E. The pioneer round of mRNA translation mediated by the CBC complex plays a central role in nonsense-mediated mRNA decay (NMD), NMD only taking place in mRNAs bound to the CBC complex, but not on eIF4E-bound mRNAs. The CBC complex enhances NMD in mRNAs containing at least one exon-junction complex (EJC), promoting the interaction between UPF1 and UPF2. The CBC complex is also involved in 'failsafe' NMD, which is independent of the EJC complex, while it does not participate in Staufen-mediated mRNA decay (SMD). During cell proliferation, the CBC complex is also involved in microRNAs (miRNAs) biogenesis via its interaction with SRRT/ARS2, thereby being required for miRNA-mediated RNA interference. The CBC complex also acts as a negative regulator of PARN, thereby acting as an inhibitor of mRNA deadenylation. In the CBC complex, NCBP2/CBP20 recognizes and binds capped RNAs (m7GpppG-capped RNA) but requires NCBP1/CBP80 to stabilize the movement of its N-terminal loop and lock the CBC into a high affinity cap-binding state with the cap structure. The conventional cap-binding complex with NCBP2 binds both small nuclear RNA (snRNA) and messenger (mRNA) and is involved in their export from the nucleus. The chain is Nuclear cap-binding protein subunit 2 (NCBP2) from Gallus gallus (Chicken).